Here is a 92-residue protein sequence, read N- to C-terminus: Small ribosomal subunit protein uS19 (92 aa).

The protein belongs to the universal ribosomal protein uS19 family.

In terms of biological role, protein S19 forms a complex with S13 that binds strongly to the 16S ribosomal RNA. The polypeptide is Small ribosomal subunit protein uS19 (Listeria innocua serovar 6a (strain ATCC BAA-680 / CLIP 11262)).